The following is a 449-amino-acid chain: tRNA-2-methylthio-N(6)-dimethylallyladenosine synthase (449 aa).

The MTTase N-terminal domain maps to R13–K128. Positions 22, 58, 92, 166, 170, and 173 each coordinate [4Fe-4S] cluster. A Radical SAM core domain is found at S152 to M383. Residues K386–L449 enclose the TRAM domain.

It belongs to the methylthiotransferase family. MiaB subfamily. Monomer. [4Fe-4S] cluster is required as a cofactor.

The protein localises to the cytoplasm. The enzyme catalyses N(6)-dimethylallyladenosine(37) in tRNA + (sulfur carrier)-SH + AH2 + 2 S-adenosyl-L-methionine = 2-methylsulfanyl-N(6)-dimethylallyladenosine(37) in tRNA + (sulfur carrier)-H + 5'-deoxyadenosine + L-methionine + A + S-adenosyl-L-homocysteine + 2 H(+). In terms of biological role, catalyzes the methylthiolation of N6-(dimethylallyl)adenosine (i(6)A), leading to the formation of 2-methylthio-N6-(dimethylallyl)adenosine (ms(2)i(6)A) at position 37 in tRNAs that read codons beginning with uridine. The sequence is that of tRNA-2-methylthio-N(6)-dimethylallyladenosine synthase from Azobacteroides pseudotrichonymphae genomovar. CFP2.